We begin with the raw amino-acid sequence, 117 residues long: UPF0342 protein LBUL_1430 (117 aa).

The protein belongs to the UPF0342 family.

This is UPF0342 protein LBUL_1430 from Lactobacillus delbrueckii subsp. bulgaricus (strain ATCC BAA-365 / Lb-18).